Reading from the N-terminus, the 350-residue chain is Probable L-aspartate decarboxylase (350 aa).

K206 bears the N6-(pyridoxal phosphate)lysine mark.

The protein belongs to the group II decarboxylase family. MfnA subfamily. Pyridoxal 5'-phosphate is required as a cofactor.

The enzyme catalyses L-aspartate + H(+) = beta-alanine + CO2. Its pathway is cofactor biosynthesis; coenzyme A biosynthesis. In terms of biological role, catalyzes the decarboxylation of L-aspartate to produce beta-alanine. The sequence is that of Probable L-aspartate decarboxylase from Haloarcula marismortui (strain ATCC 43049 / DSM 3752 / JCM 8966 / VKM B-1809) (Halobacterium marismortui).